The chain runs to 641 residues: Fructose-1,6-bisphosphatase class 3 (641 aa).

It belongs to the FBPase class 3 family. Mn(2+) is required as a cofactor.

It carries out the reaction beta-D-fructose 1,6-bisphosphate + H2O = beta-D-fructose 6-phosphate + phosphate. It participates in carbohydrate biosynthesis; gluconeogenesis. The sequence is that of Fructose-1,6-bisphosphatase class 3 from Ligilactobacillus salivarius (strain UCC118) (Lactobacillus salivarius).